The sequence spans 60 residues: MKSDIRVCANWETTHDRPVYALGDRCPECDGPTENSAPAPFSPEDPYGEYRRRVRRRASE.

The disordered stretch occupies residues 29 to 60; it reads CDGPTENSAPAPFSPEDPYGEYRRRVRRRASE.

This sequence belongs to the NOP10 family.

Its function is as follows. Involved in ribosome biogenesis; more specifically in 18S rRNA pseudouridylation and in cleavage of pre-rRNA. The protein is Ribosome biogenesis protein Nop10 of Halorubrum lacusprofundi (strain ATCC 49239 / DSM 5036 / JCM 8891 / ACAM 34).